The chain runs to 1048 residues: Ankyrin repeat domain-containing protein 27 (1048 aa).

The segment at 1-372 is sufficient for GEF activity towards RAB21; that stretch reads MALYDEDLLK…RQGSLSTKTP (372 aa). The 139-residue stretch at 233–371 folds into the VPS9 domain; it reads ASEDAAFNKI…IRQGSLSTKT (139 aa). ANK repeat units follow at residues 396 to 426, 462 to 491, 495 to 524, 528 to 557, 564 to 593, and 597 to 627; these read TPID…DKDA, RGQT…VVNA, HGST…STEV, NGNT…QACR, KGDT…PTAV, and LKET…RPRP. Positions 396–460 are sufficient for interaction with VPS29; sequence TPIDCLFKHI…PSVVTPFSRD (65 aa). The interval 451–600 is interaction with RAB38; sequence PSVVTPFSRD…TAVQNRLKET (150 aa). Residues 451–729 are interaction with RAB32; the sequence is PSVVTPFSRD…CAPAQKLARI (279 aa). The segment covering 618-627 has biased composition (basic and acidic residues); sequence HLSSDRRPRP. Positions 618 to 650 are disordered; it reads HLSSDRRPRPSEVPAQSPTRSVDSISQGSSTSS. Over residues 638–650 the composition is skewed to low complexity; that stretch reads SVDSISQGSSTSS. The segment at 658 to 707 is required for interaction with VAMP7; that stretch reads FRQEEVKKDYREVEKLLRAVADGDLEMVRYLLEWTEDDLDDVEDAISTVD. ANK repeat units lie at residues 668-698, 742-771, 775-804, 808-837, and 841-870; these read REVE…DLDD, DGFS…YSGA, SQAV…KPNK, SGNT…SINA, and KGNT…SVDI. Positions 692-745 are sufficient for interaction with VPS29; that stretch reads TEDDLDDVEDAISTVDLEFCHPLCQCPKCAPAQKLARISANGLSVNVTNQDGFS. A compositionally biased stretch (basic and acidic residues) spans 949-962; it reads ERTSRETMGRDRSV. The segment at 949–1019 is disordered; the sequence is ERTSRETMGR…AAPGHRPMVR (71 aa). 2 positions are modified to phosphoserine: S961 and S969. A compositionally biased stretch (polar residues) spans 979-995; that stretch reads TGKQSDLSDLSRYQTSE. Residues 996–1006 are compositionally biased toward basic and acidic residues; sequence EGNKGLPERPV. T1022 is subject to Phosphothreonine.

In terms of assembly, interacts with RAB21 (GDP-bound form), VPS29, KIF5A, KIF5C, GOLGA4. Interacts with RAB32 (GTP-bound form), RAB38 (GTP-bound form), VAMP7. Interacts with low affinity with RAB5. ANKRD27:RAB32 heterodimers can homodimerize to form tetramers. Can interact with RAB38 or RAB32, VPS29 and VAMP7 simultaneously. A decreased interaction with RAB32 seen in the presence of SGSM2.

The protein resides in the early endosome. It is found in the late endosome. It localises to the cytoplasmic vesicle membrane. The protein localises to the lysosome. Its subcellular location is the cell membrane. The protein resides in the melanosome. It is found in the cytoplasmic vesicle. Functionally, may be a guanine exchange factor (GEF) for Rab21, Rab32 and Rab38 and regulate endosome dynamics. May regulate the participation of VAMP7 in membrane fusion events; in vitro inhibits VAMP7-mediated SNARE complex formation by trapping VAMP7 in a closed, fusogenically inactive conformation. Involved in peripheral melanosomal distribution of TYRP1 in melanocytes; the function, which probably is implicating vesicle-trafficking, includes cooperation with Rab32, Rab38 and VAMP7. Involved in the regulation of neurite growth; the function seems to require its GEF activity, probably towards Rab21, and VAMP7 but not Rab32/38. Proposed to be involved in Golgi sorting of VAMP7 and transport of VAMP7 vesicles to the cell surface; the function seems to implicate kinesin heavy chain isoform 5 proteins, GOLGA4, RAB21 and MACF1. Required for the colocalization of VAMP7 and Rab21, probably on TGN sites. Involved in GLUT1 endosome-to-plasma membrane trafficking; the function is dependent of association with VPS29. Regulates the proper trafficking of melanogenic enzymes TYR, TYRP1 and DCT/TYRP2 to melanosomes in melanocytes. In Mus musculus (Mouse), this protein is Ankyrin repeat domain-containing protein 27 (Ankrd27).